A 3526-amino-acid chain; its full sequence is WD repeat and FYVE domain-containing protein 3 (3526 aa).

2 positions are modified to phosphoserine: Ser-1942 and Ser-2278. The sufficient for localization to p62 bodies/ALIS stretch occupies residues 2285 to 2981; it reads LTGSRRNRKE…PHPPKRVRSR (697 aa). 2 disordered regions span residues 2403-2429 and 2459-2522; these read ETNVASEIPSKQPETPDDIPQKKPARY and SSEG…EKTD. Positions 2468–2477 are enriched in basic and acidic residues; it reads EPEHGEDTIA. Ser-2492 carries the phosphoserine modification. The 126-residue stretch at 2531–2656 folds into the BEACH-type PH domain; it reads EEGEKIQHMY…IRNKVYQRFL (126 aa). An interaction with SQSTM1 region spans residues 2586-3526; the sequence is MHEPIIPRGA…RGSEDGPRNC (941 aa). Residues 2683 to 2976 form the BEACH domain; the sequence is GLLSTLVGEK…QLFKKPHPPK (294 aa). The segment at 2981-3526 is interaction with ATG5; it reads RLNGDNAGIS…RGSEDGPRNC (546 aa). 4 WD repeats span residues 3077 to 3115, 3125 to 3164, 3167 to 3206, and 3210 to 3254; these read SEWGQILCAICPNPKLVITGGTSTVVCVWEMGTSKEKAK, GHTDTVTCATASLAYHIIVSGSRDRTCIIWDLNKLSFLTQ, GHRAPVSALCINELTGDIVSCAGTYIHVWSINGNPIVSVN, and GRSQ…VPET. Residues 3272–3335 form a disordered region; that stretch reads AQIGQEAQDE…SGSDDSRRWS (64 aa). A compositionally biased stretch (acidic residues) spans 3278–3290; that stretch reads AQDEDSSDSEADE. Residues 3313–3363 form an interaction with GABARAP region; that stretch reads AASCRATAAWCTDSGSDDSRRWSDQLSLDEKDGFIFVNYSEGQTRAHLQGP. Phosphoserine occurs at positions 3335 and 3339. The LC3-interacting region (LIR) motif lies at 3346 to 3349; that stretch reads FIFV. The WD 5 repeat unit spans residues 3408-3447; that stretch reads AHPAEVTALGISKDHSRILVGDSRGRVFSWSVSDQPGRSA. The FYVE-type zinc-finger motif lies at 3454 to 3514; the sequence is DEGGDSCSGC…VCQNCYYNLQ (61 aa). Residues Cys-3460, Cys-3463, Cys-3476, Cys-3479, Cys-3484, Cys-3487, Cys-3506, and Cys-3509 each contribute to the Zn(2+) site.

As to quaternary structure, directly interacts with ATG5 and associates with the ATG12-ATG5-ATG16L complex. Interacts with p62/SQSTM1; this interaction is required to recruit WDFY3 to cytoplasmic bodies and to PML bodies. Directly interacts with GABARAP, GABARAPL1 and GABARAPL2; the interaction with GABARAP is required for WDFY3 recruitment to MAP1LC3B-positive p62/SQSTM1 bodies. Weakly interacts with MAP1LC3C; this interaction is direct. Does not interact with MAP1LC3A, nor MAP1LC3B. Interacts with TRAF6. As to expression, expressed in osteoclast and their mononuclear precursors (at protein level).

Its subcellular location is the nucleus membrane. It is found in the cytoplasm. It localises to the cytosol. The protein resides in the nucleus. The protein localises to the PML body. Its subcellular location is the membrane. It is found in the perikaryon. It localises to the cell projection. The protein resides in the axon. Required for selective macroautophagy (aggrephagy). Acts as an adapter protein by linking specific proteins destined for degradation to the core autophagic machinery members, such as the ATG5-ATG12-ATG16L E3-like ligase, SQSTM1 and LC3. Along with p62/SQSTM1, involved in the formation and autophagic degradation of cytoplasmic ubiquitin-containing inclusions (p62 bodies, ALIS/aggresome-like induced structures). Along with SQSTM1, required to recruit ubiquitinated proteins to PML bodies in the nucleus. Important for normal brain development. Essential for the formation of axonal tracts throughout the brain and spinal cord, including the formation of the major forebrain commissures. Involved in the ability of neural cells to respond to guidance cues. Required for cortical neurons to respond to the trophic effects of netrin-1/NTN1. Regulates Wnt signaling through the removal of DVL3 aggregates, likely in an autophagy-dependent manner. This process may be important for the determination of brain size during embryonic development. May regulate osteoclastogenesis by acting on the TNFSF11/RANKL - TRAF6 pathway. After cytokinetic abscission, involved in midbody remnant degradation. In vitro strongly binds to phosphatidylinositol 3-phosphate (PtdIns3P). The chain is WD repeat and FYVE domain-containing protein 3 (WDFY3) from Homo sapiens (Human).